The chain runs to 2156 residues: Probable capsid protein 3 (2156 aa).

Positions 1319 to 1345 (NKSNKSNKSNESDKSSESDKSSESSNH) are disordered. Basic and acidic residues predominate over residues 1326–1345 (KSNESDKSSESDKSSESSNH).

The protein belongs to the NCLDV major capsid protein family.

The protein resides in the virion. This chain is Probable capsid protein 3, found in Acanthamoeba polyphaga mimivirus (APMV).